Reading from the N-terminus, the 695-residue chain is DSC E3 ubiquitin ligase complex subunit 1 (695 aa).

An N-terminal signal peptide occupies residues 1-25; it reads MDRRRWVPSTPVVTLLLLFMLFAPA. Topologically, residues 26-319 are lumenal; it reads PRLPSRNGES…KGPRNFVLEN (294 aa). Residues 320–340 form a helical membrane-spanning segment; that stretch reads HLVRFSSLYIFIVLSQIFVLL. Residues 341-353 lie on the Cytoplasmic side of the membrane; the sequence is RQMRINSPSHVQR. Residues 354-374 traverse the membrane as a helical segment; it reads LSFLTIAMQAGLDAYIAIFFL. Residues 375-382 lie on the Lumenal side of the membrane; it reads STNAVIEK. The helical transmembrane segment at 383–403 threads the bilayer; it reads GYLPFVSVAFLSLVPSVMFTM. At 404 to 486 the chain is on the cytoplasmic side; the sequence is RYLALILRVQ…QRDWSAVCLR (83 aa). The disordered stretch occupies residues 419 to 473; sequence PPAPRPVTNNSSNNNTNQSNASNENSPNAPSAANDNTETTTVNPPQEDDQPMTQH. Positions 427–454 are enriched in low complexity; it reads NNSSNNNTNQSNASNENSPNAPSAANDN. The helical transmembrane segment at 487–507 threads the bilayer; sequence FYFIILVVCIASLYSAFWPVI. Residues 508–509 are Lumenal-facing; it reads YR. The chain crosses the membrane as a helical span at residues 510–530; sequence FYFISALIFTSYSFWIPQIIQ. The Cytoplasmic portion of the chain corresponds to 531 to 540; sequence NVKQGTSRSF. The helical transmembrane segment at 541–561 threads the bilayer; that stretch reads TWTYILGASVLRLYLPLAIFI. At 562-572 the chain is on the lumenal side; the sequence is DSELILGFPPK. A helical membrane pass occupies residues 573–593; sequence YFFALGLVLWMLFQVLVLLVQ. Topologically, residues 594–695 are cytoplasmic; it reads DTLGPRFFLP…PVCRCHLPAV (102 aa). An RING-type; atypical zinc finger spans residues 634-689; the sequence is CPICMQPIELVSTGSTLNPASMMVRRNYMLTPCHHLYHRQCLLQWMETRSICPVCR.

As to quaternary structure, component of the DSC E3 ubiquitin ligase complex composed of dsc1, dsc2, dsc3 and dsc4.

It is found in the endoplasmic reticulum membrane. It localises to the golgi apparatus membrane. The enzyme catalyses S-ubiquitinyl-[E2 ubiquitin-conjugating enzyme]-L-cysteine + [acceptor protein]-L-lysine = [E2 ubiquitin-conjugating enzyme]-L-cysteine + N(6)-ubiquitinyl-[acceptor protein]-L-lysine.. It participates in protein modification; protein ubiquitination. Its function is as follows. Catalytic component of the DSC E3 ubiquitin ligase complex which is required for the sre1 transcriptional activator proteolytic cleavage to release the soluble transcription factor from the membrane in low oxygen or sterol conditions. The complex also plays an important role in the multivesicular body (MVB) pathway and functions in a post-endoplasmic reticulum pathway for protein degradation. This Schizosaccharomyces pombe (strain 972 / ATCC 24843) (Fission yeast) protein is DSC E3 ubiquitin ligase complex subunit 1 (dsc1).